The primary structure comprises 356 residues: Homoserine O-acetyltransferase (356 aa).

Positions 50–335 (NVILVCHALT…DEPYGHDAFL (286 aa)) constitute an AB hydrolase-1 domain. The active-site Nucleophile is S146. R215 provides a ligand contact to substrate. Catalysis depends on residues D302 and H331. Position 332 (D332) interacts with substrate.

Belongs to the AB hydrolase superfamily. MetX family. Homodimer.

The protein resides in the cytoplasm. The enzyme catalyses L-homoserine + acetyl-CoA = O-acetyl-L-homoserine + CoA. The protein operates within amino-acid biosynthesis; L-methionine biosynthesis via de novo pathway; O-acetyl-L-homoserine from L-homoserine: step 1/1. In terms of biological role, transfers an acetyl group from acetyl-CoA to L-homoserine, forming acetyl-L-homoserine. The polypeptide is Homoserine O-acetyltransferase (Chlorobaculum tepidum (strain ATCC 49652 / DSM 12025 / NBRC 103806 / TLS) (Chlorobium tepidum)).